The following is a 301-amino-acid chain: Acetylglutamate kinase (301 aa).

Residues 68-69 (GG), R90, and N195 contribute to the substrate site.

This sequence belongs to the acetylglutamate kinase family. ArgB subfamily.

It localises to the cytoplasm. The enzyme catalyses N-acetyl-L-glutamate + ATP = N-acetyl-L-glutamyl 5-phosphate + ADP. It functions in the pathway amino-acid biosynthesis; L-arginine biosynthesis; N(2)-acetyl-L-ornithine from L-glutamate: step 2/4. Its function is as follows. Catalyzes the ATP-dependent phosphorylation of N-acetyl-L-glutamate. This is Acetylglutamate kinase from Pseudomonas fluorescens (strain SBW25).